The following is a 312-amino-acid chain: Olfactory receptor 2M3 (312 aa).

The Extracellular portion of the chain corresponds to 1–25; that stretch reads MARENSTFNSDFILLGIFNHSPTHT. N5 carries an N-linked (GlcNAc...) asparagine glycan. The chain crosses the membrane as a helical span at residues 26–49; sequence FLFFLVLAIFSVAFMGNSVMVLLI. Topologically, residues 50 to 57 are cytoplasmic; the sequence is YLDTQLHT. The chain crosses the membrane as a helical span at residues 58–79; it reads PMYLLLSQLSLMDLMLICTTVP. The Extracellular portion of the chain corresponds to 80–100; the sequence is KMAFNYLSGSKSISMAGCATQ. C97 and C189 form a disulfide bridge. A helical transmembrane segment spans residues 101-120; that stretch reads IFFYTSLLGSECFLLAVMAY. Residues 121-139 lie on the Cytoplasmic side of the membrane; it reads DRYTAICHPLRYTNLMSPK. A helical transmembrane segment spans residues 140–158; the sequence is ICGLMTAFSWILGSTDGII. The Extracellular portion of the chain corresponds to 159–195; the sequence is DVVATFSFSYCGSREIAHFFCDFPSLLILSCSDTSIF. The chain crosses the membrane as a helical span at residues 196-219; it reads EKILFICCIVMIVFPVAIIIASYA. Residues 220–236 are Cytoplasmic-facing; it reads RVILAVIHMGSGEGRRK. The chain crosses the membrane as a helical span at residues 237 to 259; the sequence is AFTTCSSHLLVVGMYYGAALFMY. At 260–272 the chain is on the extracellular side; sequence IRPTSDRSPTQDK. Residues 273-292 traverse the membrane as a helical segment; it reads MVSVFYTILTPMLNPLIYSL. Residues 293–312 lie on the Cytoplasmic side of the membrane; it reads RNKEVTRAFMKILGKGKSGE.

This sequence belongs to the G-protein coupled receptor 1 family.

It localises to the cell membrane. In terms of biological role, odorant receptor. This chain is Olfactory receptor 2M3 (OR2M3), found in Homo sapiens (Human).